A 281-amino-acid polypeptide reads, in one-letter code: Stomatin-4 (281 aa).

Residues 28–48 (WIITIISYLVVLFTLPLSAFF) form a helical membrane-spanning segment.

This sequence belongs to the band 7/mec-2 family.

Its subcellular location is the membrane. This chain is Stomatin-4 (sto-4), found in Caenorhabditis elegans.